The sequence spans 212 residues: Probable GTP-binding protein EngB (212 aa).

The EngB-type G domain occupies 23–197; the sequence is TGIEVAFAGR…ERILDGWFGL (175 aa). GTP contacts are provided by residues 31–38, 58–62, 76–79, 143–146, and 176–178; these read GRSNAGKS, GRTQL, DLPG, TKAD, and FSS. 2 residues coordinate Mg(2+): S38 and T60.

Belongs to the TRAFAC class TrmE-Era-EngA-EngB-Septin-like GTPase superfamily. EngB GTPase family. The cofactor is Mg(2+).

Functionally, necessary for normal cell division and for the maintenance of normal septation. This is Probable GTP-binding protein EngB from Alteromonas mediterranea (strain DSM 17117 / CIP 110805 / LMG 28347 / Deep ecotype).